The sequence spans 478 residues: Septin-4 (478 aa).

Disordered stretches follow at residues 40–74 and 87–115; these read DFSG…LYDD and ADNQ…LDPY. Over residues 95–108 the composition is skewed to low complexity; the sequence is APAPLSPSARPRSP. Residues serine 117 and serine 118 each carry the phosphoserine modification. The 274-residue stretch at 141–414 folds into the Septin-type G domain; the sequence is KGFDFTLMVA…ENYRAQCIQS (274 aa). The tract at residues 151 to 158 is G1 motif; that stretch reads GESGLGKS. Residues 151 to 158 and threonine 185 contribute to the GTP site; that span reads GESGLGKS. The interval 208–211 is G3 motif; sequence DTPG. A G4 motif region spans residues 289-292; the sequence is AKAD. 290 to 298 contributes to the GTP binding site; that stretch reads KADTLTPPE. Residue serine 325 is modified to Phosphoserine. GTP contacts are provided by glycine 348 and arginine 363. The tract at residues 428-448 is disordered; the sequence is LTRESGTDFPIPAVPPGTDPE. Serine 432 is subject to Phosphoserine. At threonine 434 the chain carries Phosphothreonine. Residues 446-478 adopt a coiled-coil conformation; sequence DPETEKLIREKDEELRRMQEILHKIQKQMKETY.

This sequence belongs to the TRAFAC class TrmE-Era-EngA-EngB-Septin-like GTPase superfamily. Septin GTPase family. As to quaternary structure, septins polymerize into heterooligomeric protein complexes that form filaments, and can associate with cellular membranes, actin filaments and microtubules. GTPase activity is required for filament formation. Interacts with SEPTIN8. Component of a septin core octameric complex consisting of SEPTIN12, SEPTIN7, SEPTIN6 and SEPTIN2 or SEPTIN4 in the order 12-7-6-2-2-6-7-12 or 12-7-6-4-4-6-7-12. Interacts with SEPTIN14 (via C-terminus). Interacts with DYRK1A. Interacts with SLC6A3/DAT and SNCA/alpha-synuclein. Interacts with STX1A; in the striatum. Interacts with XIAP (via BIR3 domain) following the induction of apoptosis. Interacts with AREL1 (via HECT domain); in the cytoplasm following induction of apoptosis. In terms of processing, ubiquitinated by AREL1. Phosphorylated by DYRK1A.

The protein resides in the cytoplasm. The protein localises to the cell projection. It localises to the cilium. It is found in the flagellum. Its subcellular location is the cytoplasmic vesicle. The protein resides in the secretory vesicle. The protein localises to the axon. It localises to the dendrite. It is found in the perikaryon. Its subcellular location is the synapse. Functionally, filament-forming cytoskeletal GTPase. Pro-apoptotic protein involved in LGR5-positive intestinal stem cell and Paneth cell expansion in the intestines, via its interaction with XIAP. May also play a role in the regulation of cell fate in the intestine. Positive regulator of apoptosis involved in hematopoietic stem cell homeostasis; via its interaction with XIAP. Negative regulator of repair and hair follicle regeneration in response to injury, due to inhibition of hair follicle stem cell proliferation, potentially via its interaction with XIAP. Plays an important role in male fertility and sperm motility. During spermiogenesis, essential for the establishment of the annulus (a fibrous ring structure connecting the midpiece and the principal piece of the sperm flagellum) which is a requisite for the structural and mechanical integrity of the sperm. Involved in the migration of cortical neurons and the formation of neuron leading processes during embryonic development. Required for dopaminergic metabolism in presynaptic autoreceptors; potentially via activity as a presynaptic scaffold protein. The sequence is that of Septin-4 from Macaca fascicularis (Crab-eating macaque).